Here is a 237-residue protein sequence, read N- to C-terminus: LexA repressor (237 aa).

The segment at residues 26–46 is a DNA-binding region (H-T-H motif); sequence FDEMKDALDLRSKSGIHRLIT. Active-site for autocatalytic cleavage activity residues include serine 158 and lysine 196.

Belongs to the peptidase S24 family. As to quaternary structure, homodimer.

The catalysed reaction is Hydrolysis of Ala-|-Gly bond in repressor LexA.. Its function is as follows. Represses a number of genes involved in the response to DNA damage (SOS response), including recA and lexA. In the presence of single-stranded DNA, RecA interacts with LexA causing an autocatalytic cleavage which disrupts the DNA-binding part of LexA, leading to derepression of the SOS regulon and eventually DNA repair. This chain is LexA repressor, found in Rhodopseudomonas palustris (strain BisB18).